A 447-amino-acid chain; its full sequence is uncharacterized protein (447 aa).

The segment at Pro39–Gln76 is disordered. Residues His61–Asp72 are compositionally biased toward basic and acidic residues.

The protein belongs to the 3-oxoacid CoA-transferase subunit A family.

This is an uncharacterized protein from Archaeoglobus fulgidus (strain ATCC 49558 / DSM 4304 / JCM 9628 / NBRC 100126 / VC-16).